Here is an 890-residue protein sequence, read N- to C-terminus: DNA mismatch repair protein MutS (890 aa).

Glycine 634–serine 641 provides a ligand contact to ATP.

The protein belongs to the DNA mismatch repair MutS family.

In terms of biological role, this protein is involved in the repair of mismatches in DNA. It is possible that it carries out the mismatch recognition step. This protein has a weak ATPase activity. This chain is DNA mismatch repair protein MutS, found in Burkholderia pseudomallei (strain K96243).